The chain runs to 622 residues: 1-deoxy-D-xylulose-5-phosphate synthase (622 aa).

Thiamine diphosphate contacts are provided by residues H80 and G121 to S123. D152 lines the Mg(2+) pocket. Thiamine diphosphate is bound by residues G153–A154, N181, Y288, and E370. N181 lines the Mg(2+) pocket.

This sequence belongs to the transketolase family. DXPS subfamily. In terms of assembly, homodimer. Mg(2+) is required as a cofactor. Requires thiamine diphosphate as cofactor.

The enzyme catalyses D-glyceraldehyde 3-phosphate + pyruvate + H(+) = 1-deoxy-D-xylulose 5-phosphate + CO2. Its pathway is metabolic intermediate biosynthesis; 1-deoxy-D-xylulose 5-phosphate biosynthesis; 1-deoxy-D-xylulose 5-phosphate from D-glyceraldehyde 3-phosphate and pyruvate: step 1/1. Its function is as follows. Catalyzes the acyloin condensation reaction between C atoms 2 and 3 of pyruvate and glyceraldehyde 3-phosphate to yield 1-deoxy-D-xylulose-5-phosphate (DXP). The chain is 1-deoxy-D-xylulose-5-phosphate synthase from Shewanella amazonensis (strain ATCC BAA-1098 / SB2B).